The sequence spans 147 residues: Myoglobin (147 aa).

One can recognise a Globin domain in the interval 2-141 (ADHDLVLKCW…VIGDIDGYYK (140 aa)). Nitrite is bound at residue histidine 60. Histidine 60 serves as a coordination point for O2. Position 89 (histidine 89) interacts with heme b.

Belongs to the globin family. Monomeric.

It localises to the cytoplasm. The protein resides in the sarcoplasm. It carries out the reaction Fe(III)-heme b-[protein] + nitric oxide + H2O = Fe(II)-heme b-[protein] + nitrite + 2 H(+). It catalyses the reaction H2O2 + AH2 = A + 2 H2O. Functionally, monomeric heme protein which primary function is to store oxygen and facilitate its diffusion within muscle tissues. Reversibly binds oxygen through a pentacoordinated heme iron and enables its timely and efficient release as needed during periods of heightened demand. Depending on the oxidative conditions of tissues and cells, and in addition to its ability to bind oxygen, it also has a nitrite reductase activity whereby it regulates the production of bioactive nitric oxide. Under stress conditions, like hypoxia and anoxia, it also protects cells against reactive oxygen species thanks to its pseudoperoxidase activity. In Danio rerio (Zebrafish), this protein is Myoglobin (mb).